A 97-amino-acid chain; its full sequence is Large ribosomal subunit protein bL27 (97 aa).

Residues M1–F12 constitute a propeptide that is removed on maturation. Residues H14–A37 are disordered.

It belongs to the bacterial ribosomal protein bL27 family. The N-terminus is cleaved by ribosomal processing cysteine protease Prp.

The sequence is that of Large ribosomal subunit protein bL27 from Streptococcus gordonii (strain Challis / ATCC 35105 / BCRC 15272 / CH1 / DL1 / V288).